Here is a 632-residue protein sequence, read N- to C-terminus: tRNA uridine 5-carboxymethylaminomethyl modification enzyme MnmG (632 aa).

13-18 (GGGHAG) lines the FAD pocket. Residue 273–287 (GPRYCPSIEDKIHRF) coordinates NAD(+).

Belongs to the MnmG family. In terms of assembly, homodimer. Heterotetramer of two MnmE and two MnmG subunits. Requires FAD as cofactor.

It is found in the cytoplasm. Functionally, NAD-binding protein involved in the addition of a carboxymethylaminomethyl (cmnm) group at the wobble position (U34) of certain tRNAs, forming tRNA-cmnm(5)s(2)U34. This is tRNA uridine 5-carboxymethylaminomethyl modification enzyme MnmG from Psychrobacter arcticus (strain DSM 17307 / VKM B-2377 / 273-4).